We begin with the raw amino-acid sequence, 930 residues long: Translation initiation factor IF-2 (930 aa).

Positions 31–317 are disordered; that stretch reads FVKSASSTVE…RKSKRAKRAE (287 aa). A compositionally biased stretch (low complexity) spans 61-78; sequence PAAGASNGAPAKPSAPGA. Pro residues-rich tracts occupy residues 79 to 99 and 108 to 120; these read RPGP…PAPA and PAAP…PPAP. Positions 121–135 are enriched in low complexity; the sequence is AASAAPPSAPEAPSA. Composition is skewed to pro residues over residues 136–158 and 178–192; these read RPTP…PAPR and PRPQ…PRPG. A compositionally biased stretch (gly residues) spans 193-205; that stretch reads PGAGGPRPGGGPR. The span at 212–242 shows a compositional bias: pro residues; the sequence is NMPPRPVGGPRPGGGPRPGGGPRPGAGPRPT. Residues 244–301 are compositionally biased toward gly residues; the sequence is GGAGRPGGGGGGNYRGGGAGGGGGAGGAAAGGFRGRPGGGGGRPGQRGGAAGAFGRPG. The span at 305 to 314 shows a compositional bias: basic residues; sequence KRGRKSKRAK. Positions 426-598 constitute a tr-type G domain; the sequence is FRPPVVTVMG…VVLTADASLD (173 aa). A G1 region spans residues 435-442; sequence GHVDHGKT. Residue 435–442 participates in GTP binding; the sequence is GHVDHGKT. Positions 460 to 464 are G2; it reads GITQH. Residues 485–488 are G3; the sequence is DTPG. GTP contacts are provided by residues 485–489 and 539–542; these read DTPGH and NKID. The interval 539 to 542 is G4; the sequence is NKID. The segment at 575 to 577 is G5; it reads SAK.

The protein belongs to the TRAFAC class translation factor GTPase superfamily. Classic translation factor GTPase family. IF-2 subfamily.

The protein localises to the cytoplasm. Functionally, one of the essential components for the initiation of protein synthesis. Protects formylmethionyl-tRNA from spontaneous hydrolysis and promotes its binding to the 30S ribosomal subunits. Also involved in the hydrolysis of GTP during the formation of the 70S ribosomal complex. In Mycolicibacterium gilvum (strain PYR-GCK) (Mycobacterium gilvum (strain PYR-GCK)), this protein is Translation initiation factor IF-2.